The chain runs to 225 residues: MKLLVVEDEALLRHHLYTRLGEQGHVVDAVPDAEEALYRVSEYHHDLAVIDLGLPGMSGLDLIRELRSQGKSFPILILTARGNWQDKVEGLAAGADDYVVKPFQFEELEARLNALLRRSSGFVQSTIEAGPLVLDLNRKQALVEEQPVALTAYEYRILEYLMRHHQQVVAKERLMEQLYPDDEERDANVIEVLVGRLRRKLEACGGFKPIDTVRGQGYLFTERCR.

The 115-residue stretch at 2–116 (KLLVVEDEAL…ELEARLNALL (115 aa)) folds into the Response regulatory domain. A 4-aspartylphosphate modification is found at D51. Residues 124–222 (QSTIEAGPLV…VRGQGYLFTE (99 aa)) constitute a DNA-binding region (ompR/PhoB-type).

Member of the two-component regulatory system PhoP/PhoQ that plays a role in the regulation of resistance towards polymyxin B and cationic antimicrobial peptides in response to limiting concentrations of Mg(2+). Functions as a transcriptional activator by direct binding to a cis-acting sequence upstream of the target gene promoters including oprH and pmrH promoters. In Pseudomonas aeruginosa (strain ATCC 15692 / DSM 22644 / CIP 104116 / JCM 14847 / LMG 12228 / 1C / PRS 101 / PAO1), this protein is Two-component response regulator PhoP (phoP).